The following is a 77-amino-acid chain: U-actitoxin-Avd12a (77 aa).

An N-terminal signal peptide occupies residues 1–23 (MALFRMLFLCAVLVLLTSKEGMS). A propeptide spanning residues 24 to 29 (YEEPEN) is cleaved from the precursor. The region spanning 31–73 (EGVACTGQYAESFCLNGGTCRYIQSIGEYYCICNGDYTGHRCE) is the EGF-like domain. Disulfide bonds link Cys35–Cys50, Cys44–Cys61, and Cys63–Cys72.

It belongs to the EGF domain peptide family.

The protein resides in the secreted. The protein localises to the nematocyst. Its function is as follows. Has both toxic and EGF activity. Its EGF activity consists of rounding cells (morphological change) and inducing tyrosine phosphorylation of the EGFR in A431 cells, but with a lower potency that human EGF. The polypeptide is U-actitoxin-Avd12a (Anemonia viridis (Snakelocks anemone)).